Here is a 246-residue protein sequence, read N- to C-terminus: 1-(5-phosphoribosyl)-5-[(5-phosphoribosylamino)methylideneamino] imidazole-4-carboxamide isomerase (246 aa).

Asp10 (proton acceptor) is an active-site residue. The active-site Proton donor is Asp131.

This sequence belongs to the HisA/HisF family.

The protein localises to the cytoplasm. The catalysed reaction is 1-(5-phospho-beta-D-ribosyl)-5-[(5-phospho-beta-D-ribosylamino)methylideneamino]imidazole-4-carboxamide = 5-[(5-phospho-1-deoxy-D-ribulos-1-ylimino)methylamino]-1-(5-phospho-beta-D-ribosyl)imidazole-4-carboxamide. It functions in the pathway amino-acid biosynthesis; L-histidine biosynthesis; L-histidine from 5-phospho-alpha-D-ribose 1-diphosphate: step 4/9. This chain is 1-(5-phosphoribosyl)-5-[(5-phosphoribosylamino)methylideneamino] imidazole-4-carboxamide isomerase, found in Acidiphilium cryptum (strain JF-5).